A 719-amino-acid polypeptide reads, in one-letter code: MADVTSMGEITAIAARIGVDLSQIDLDSIHLPPGEDCGIPSDDDDLMEEDPLEFDAGFGNILVVDNLPVVPKEKFEKLEGVVRKIYSQLGVIKEDGLWMPVDPETHKTLGYCFIEYNTPQEAELSKEKTHGYKLDRSHIFAVNMFDDIERFLKVPDEWAPPEIKPYVPGENLQQWLTDEKARDQFVIRAGNDTEVLWNDARQLKPELVYKRSFWTESFVQWSPLGTYLATVHRQGGAIWGGATTSNRLMRYAHPQVKLIDFSLAERYLVTYSSHEPSNPRDSHAVVLNISDVRTGKVMRDFQGSADEFAVGGTGGVTGVSWPVFRWSGGKQDKYFARIGKNVISVYETETFSLIDKKSIKVENVMDFSWSPADPILALFVPECGNQPARVSLVQIPSKEELRQKNLFSVSDCKMYWQSNGDYLAVKVDRYTKTKKSTYTGFELFRIKERDIPIEVLELDNTNDKIPAFGWGPEGSPICCYPSVTTPRPDIRFYSVPVWALTPGLVSKLTTLKGKQANALYWSPGGRFLILTGLKGFNGQLEFFDVDELETMASAEHFMATDVEWDPTGRYVATSVTSVHEMENGFNIWSFNGKLLYRILKDHFFQYLWRPRPPSFLSKEKEEEIAKNLKRYSKKYEAEDQDVSLQLSEQDREKRKKLKEEWEAWINEWKRLHEEEKMERQKLRDGEASDEEEEYEAKEVEVEEIINVTEEIIPFEESQQ.

The 88-residue stretch at 60 to 147 folds into the RRM domain; the sequence is NILVVDNLPV…HIFAVNMFDD (88 aa). WD repeat units follow at residues 167–207, 511–553, and 555–598; these read VPGE…KPEL, LKGK…TMAS, and EHFM…LYRI. Positions 675-686 are enriched in basic and acidic residues; the sequence is EKMERQKLRDGE. A disordered region spans residues 675–698; the sequence is EKMERQKLRDGEASDEEEEYEAKE. Residues 687-698 show a composition bias toward acidic residues; the sequence is ASDEEEEYEAKE.

It belongs to the eIF-3 subunit B family. As to quaternary structure, component of the eukaryotic translation initiation factor 3 (eIF-3) complex.

It is found in the cytoplasm. Its function is as follows. RNA-binding component of the eukaryotic translation initiation factor 3 (eIF-3) complex, which is involved in protein synthesis of a specialized repertoire of mRNAs and, together with other initiation factors, stimulates binding of mRNA and methionyl-tRNAi to the 40S ribosome. The eIF-3 complex specifically targets and initiates translation of a subset of mRNAs involved in cell proliferation. This is Eukaryotic translation initiation factor 3 subunit B (TIF3B1) from Nicotiana tabacum (Common tobacco).